Consider the following 630-residue polypeptide: Sodium-dependent serotonin transporter (630 aa).

Over 1–87 the chain is Cytoplasmic; it reads METTPLNSQK…ERETWGKKVD (87 aa). Positions 31-59 are disordered; sequence VPTPGDKVESGQISNGYSAVPSPGAGDDT. Tyr-47 carries the phosphotyrosine modification. The helical transmembrane segment at 88-112 threads the bilayer; that stretch reads FLLSVIGYAVDLGNVWRFPYICYQN. Na(+) contacts are provided by Gly-94, Ala-96, Val-97, Asp-98, and Asn-101. Serotonin is bound at residue Asp-98. Residues 113 to 115 lie on the Extracellular side of the membrane; the sequence is GGG. A helical membrane pass occupies residues 116–135; the sequence is AFLIPYTIMAIFGGIPLFYM. Residues 136–160 are Cytoplasmic-facing; it reads ELALGQYHRNGCISIWRKICPIFKG. Residue Tyr-142 is modified to Phosphotyrosine. Residues 161 to 186 form a helical membrane-spanning segment; that stretch reads IGYAICIIAFYIASYYNTIMAWALYY. The Extracellular segment spans residues 187–252; that stretch reads LISSFTDQLP…KGLQDLGGIS (66 aa). Cys-200 and Cys-209 are oxidised to a cystine. Asn-208 and Asn-217 each carry an N-linked (GlcNAc...) asparagine glycan. The helical transmembrane segment at 253 to 271 threads the bilayer; the sequence is WQLALCIMLIFTVIYFSIW. Residues 272–277 are Cytoplasmic-facing; sequence KGVKTS. Thr-276 carries the post-translational modification Phosphothreonine. A helical membrane pass occupies residues 278-297; that stretch reads GKVVWVTATFPYIILSVLLV. Topologically, residues 298–324 are extracellular; the sequence is RGATLPGAWRGVLFYLKPNWQKLLETG. Residues 325–347 form a helical membrane-spanning segment; sequence VWIDAAAQIFFSLGPGFGVLLAF. Residue Ser-336 coordinates Na(+). Residues 348-360 lie on the Cytoplasmic side of the membrane; sequence ASYNKFNNNCYQD. A helical transmembrane segment spans residues 361–380; that stretch reads ALVTSVVNCMTSFVSGFVIF. Asn-368 contributes to the Na(+) binding site. Residues 381–421 are Extracellular-facing; the sequence is TVLGYMAEMRNEDVSEVAKDAGPSLLFITYAEAIANMPAST. The helical transmembrane segment at 422 to 443 threads the bilayer; the sequence is FFAIIFFLMLITLGLDSTFAGL. Na(+)-binding residues include Leu-434, Asp-437, and Ser-438. Thr-439 is a binding site for serotonin. The Cytoplasmic segment spans residues 444 to 463; it reads EGVITAVLDEFPHIWAKRRE. A helical transmembrane segment spans residues 464-483; that stretch reads WFVLAVVITCFFGSLVTLTF. Over 484–494 the chain is Extracellular; sequence GGAYVVKLLEE. Glu-494 and Tyr-495 together coordinate serotonin. The chain crosses the membrane as a helical span at residues 495–516; it reads YATGPAVLTVALIEAVAVSWFY. Residues 517-538 are Cytoplasmic-facing; it reads GITQFCRDVKEMLGFSPGWFWR. The chain crosses the membrane as a helical span at residues 539 to 558; the sequence is ICWVAISPLFLLFIICSFLM. Serotonin contacts are provided by Phe-556 and Ser-559. At 559–574 the chain is on the extracellular side; that stretch reads SPPQLRLFQYNYPHWS. A helical membrane pass occupies residues 575–595; the sequence is IILGYCIGTSSFVCIPTYIAY. Residues 596–630 are Cytoplasmic-facing; that stretch reads RLISTPGTFKERIIKSITPETPTEIPCGDVRLNAV. The interval 616 to 624 is interaction with RAB4A; the sequence is TPTEIPCGD.

It belongs to the sodium:neurotransmitter symporter (SNF) (TC 2.A.22) family. SLC6A4 subfamily. As to quaternary structure, monomer or homooligomer. Interacts (via C-terminus) with SCAMP2; the interaction is direct and retains transporter molecules intracellularly. Interacts with filamentous actin and STX1A. Interacts (via the N-terminus) with STX1A (via the H3 domain); this interaction regulates SLC4A6 channel conductance. Interacts with SEC23A, SEC24C and PATJ. Interacts with NOS1; the interaction may diminish the cell surface localization of SERT in the brain and, correspondingly, reduce serotonin reuptake. Interacts with TGFB1I1. Interacts with ITGAV:ITGB3. Interacts (via C-terminus) with ITGB3; this interaction regulates SLC6A4 trafficking. Phosphorylation at Thr-276 increases 5-HT uptake and is required for cGMP-mediated SERT regulation.

It localises to the cell membrane. The protein localises to the endomembrane system. The protein resides in the endosome membrane. Its subcellular location is the synapse. It is found in the cell junction. It localises to the focal adhesion. The protein localises to the cell projection. The protein resides in the neuron projection. The enzyme catalyses serotonin(out) + K(+)(in) + Na(+)(out) + H(+)(in) = serotonin(in) + K(+)(out) + Na(+)(in) + H(+)(out). Its function is as follows. Serotonin transporter that cotransports serotonin with one Na(+) ion in exchange for one K(+) ion and possibly one proton in an overall electroneutral transport cycle. Transports serotonin across the plasma membrane from the extracellular compartment to the cytosol thus limiting serotonin intercellular signaling. Essential for serotonin homeostasis in the central nervous system. In the developing somatosensory cortex, acts in glutamatergic neurons to control serotonin uptake and its trophic functions accounting for proper spatial organization of cortical neurons and elaboration of sensory circuits. In the mature cortex, acts primarily in brainstem raphe neurons to mediate serotonin uptake from the synaptic cleft back into the pre-synaptic terminal thus terminating serotonin signaling at the synapse. Modulates mucosal serotonin levels in the gastrointestinal tract through uptake and clearance of serotonin in enterocytes. Required for enteric neurogenesis and gastrointestinal reflexes. Regulates blood serotonin levels by ensuring rapid high affinity uptake of serotonin from plasma to platelets, where it is further stored in dense granules via vesicular monoamine transporters and then released upon stimulation. Mechanistically, the transport cycle starts with an outward-open conformation having Na1(+) and Cl(-) sites occupied. The binding of a second extracellular Na2(+) ion and serotonin substrate leads to structural changes to outward-occluded to inward-occluded to inward-open, where the Na2(+) ion and serotonin are released into the cytosol. Binding of intracellular K(+) ion induces conformational transitions to inward-occluded to outward-open and completes the cycle by releasing K(+) possibly together with a proton bound to Asp-98 into the extracellular compartment. Na1(+) and Cl(-) ions remain bound throughout the transport cycle. Additionally, displays serotonin-induced channel-like conductance for monovalent cations, mainly Na(+) ions. The channel activity is uncoupled from the transport cycle and may contribute to the membrane resting potential or excitability. This is Sodium-dependent serotonin transporter (SLC6A4) from Macaca mulatta (Rhesus macaque).